Reading from the N-terminus, the 375-residue chain is F420-dependent formate dehydrogenase 2 subunit beta (375 aa).

4Fe-4S ferredoxin-type domains are found at residues proline 268 to proline 291 and isoleucine 320 to tyrosine 349. Residues cysteine 280, cysteine 283, cysteine 286, cysteine 290, cysteine 329, cysteine 332, cysteine 335, and cysteine 339 each contribute to the [4Fe-4S] cluster site.

It belongs to the FrhB family. In terms of assembly, dimer of an alpha (FdhA2) and a beta (FdhB2) subunit. [4Fe-4S] cluster serves as cofactor. It depends on FAD as a cofactor. The cofactor is Zn(2+).

It catalyses the reaction oxidized coenzyme F420-(gamma-L-Glu)(n) + formate + 2 H(+) = reduced coenzyme F420-(gamma-L-Glu)(n) + CO2. Its function is as follows. Catalyzes the oxidation of formate to carbon dioxide, with coenzyme F420 as the electron acceptor. In vitro can also use methyl viologen as electron acceptor. The protein is F420-dependent formate dehydrogenase 2 subunit beta of Methanococcus maripaludis (strain DSM 14266 / JCM 13030 / NBRC 101832 / S2 / LL).